We begin with the raw amino-acid sequence, 336 residues long: Protein-glutamate methylesterase/protein-glutamine glutaminase 3 (336 aa).

The Response regulatory domain occupies 2–119 (KIAIVNDMPM…PNPKEAAAPL (118 aa)). Residue D53 is modified to 4-aspartylphosphate. The CheB-type methylesterase domain maps to 147 to 336 (PARRDRLVAI…APRLVEVFTQ (190 aa)). Active-site residues include S159, H186, and D279.

It belongs to the CheB family. In terms of processing, phosphorylated by CheA. Phosphorylation of the N-terminal regulatory domain activates the methylesterase activity.

It is found in the cytoplasm. The catalysed reaction is [protein]-L-glutamate 5-O-methyl ester + H2O = L-glutamyl-[protein] + methanol + H(+). The enzyme catalyses L-glutaminyl-[protein] + H2O = L-glutamyl-[protein] + NH4(+). Functionally, involved in chemotaxis. Part of a chemotaxis signal transduction system that modulates chemotaxis in response to various stimuli. Catalyzes the demethylation of specific methylglutamate residues introduced into the chemoreceptors (methyl-accepting chemotaxis proteins or MCP) by CheR. Also mediates the irreversible deamidation of specific glutamine residues to glutamic acid. This is Protein-glutamate methylesterase/protein-glutamine glutaminase 3 from Pseudomonas savastanoi pv. phaseolicola (strain 1448A / Race 6) (Pseudomonas syringae pv. phaseolicola (strain 1448A / Race 6)).